A 468-amino-acid polypeptide reads, in one-letter code: PTS system mannitol-specific EIICB component (468 aa).

Residues 1–25 (MNNQPSFRARVQKFGSFLSGMIMPN) are Cytoplasmic-facing. The PTS EIIC type-2 domain maps to 14–344 (FGSFLSGMIM…ILKTSKATAE (331 aa)). The chain crosses the membrane as a helical span at residues 26-47 (IGAFIAWGLITALFIPTGWWPN). The Extracellular segment spans residues 48-51 (EQLA). A helical transmembrane segment spans residues 52–72 (ELVGPMITYLLPLLIGYTGGK). Topologically, residues 73-135 (MIYDVRGGVV…SGFEMLVNNF (63 aa)) are cytoplasmic. The chain crosses the membrane as a helical span at residues 136–157 (SAGILAAILAIVAFLGIGPVVV). Over 158-166 (SFSNVLASG) the chain is Extracellular. Residues 167 to 187 (VEVIIGAGLLPLASIFIEPAK) form a helical membrane-spanning segment. Topologically, residues 188 to 274 (VLFLNNAINH…ILMKPTLILA (87 aa)) are cytoplasmic. A helical transmembrane segment spans residues 275-294 (VIAGGMSGVFTFVLFNAGLV). Topologically, residues 295–314 (AVPSPGSIFALLAMTPRGEY) are extracellular. Residues 315–336 (AGVLAGVIIATVVSFVIASIIL) form a helical membrane-spanning segment. The Cytoplasmic segment spans residues 337 to 468 (KTSKATAEDL…YDELVNRLKS (132 aa)). In terms of domain architecture, PTS EIIB type-2 spans 380 to 468 (NKIIFACDAG…YDELVNRLKS (89 aa)). Cysteine 386 acts as the Phosphocysteine intermediate; for EIIB activity in catalysis. At cysteine 386 the chain carries Phosphocysteine; by EIIA.

Homodimer.

Its subcellular location is the cell membrane. It carries out the reaction D-mannitol(out) + N(pros)-phospho-L-histidyl-[protein] = D-mannitol 1-phosphate(in) + L-histidyl-[protein]. In terms of biological role, the phosphoenolpyruvate-dependent sugar phosphotransferase system (sugar PTS), a major carbohydrate active transport system, catalyzes the phosphorylation of incoming sugar substrates concomitantly with their translocation across the cell membrane. The enzyme II CmtAB PTS system is involved in D-mannitol transport. The polypeptide is PTS system mannitol-specific EIICB component (mtlA) (Halalkalibacterium halodurans (strain ATCC BAA-125 / DSM 18197 / FERM 7344 / JCM 9153 / C-125) (Bacillus halodurans)).